The chain runs to 132 residues: Small ribosomal subunit protein uS8 (132 aa).

It belongs to the universal ribosomal protein uS8 family. As to quaternary structure, part of the 30S ribosomal subunit. Contacts proteins S5 and S12.

Functionally, one of the primary rRNA binding proteins, it binds directly to 16S rRNA central domain where it helps coordinate assembly of the platform of the 30S subunit. The chain is Small ribosomal subunit protein uS8 (rpsH) from Caldanaerobacter subterraneus subsp. tengcongensis (strain DSM 15242 / JCM 11007 / NBRC 100824 / MB4) (Thermoanaerobacter tengcongensis).